A 688-amino-acid chain; its full sequence is Elongation factor G (688 aa).

Positions 8-282 constitute a tr-type G domain; that stretch reads EKFRNFGIMA…GVVDYLPSPL (275 aa). Residues 17-24, 81-85, and 135-138 each bind GTP; these read AHIDAGKT, DTPGH, and NKMD.

This sequence belongs to the TRAFAC class translation factor GTPase superfamily. Classic translation factor GTPase family. EF-G/EF-2 subfamily.

Its subcellular location is the cytoplasm. In terms of biological role, catalyzes the GTP-dependent ribosomal translocation step during translation elongation. During this step, the ribosome changes from the pre-translocational (PRE) to the post-translocational (POST) state as the newly formed A-site-bound peptidyl-tRNA and P-site-bound deacylated tRNA move to the P and E sites, respectively. Catalyzes the coordinated movement of the two tRNA molecules, the mRNA and conformational changes in the ribosome. The chain is Elongation factor G from Clostridium perfringens (strain 13 / Type A).